A 245-amino-acid polypeptide reads, in one-letter code: tRNA1(Val) (adenine(37)-N6)-methyltransferase (245 aa).

This sequence belongs to the methyltransferase superfamily. tRNA (adenine-N(6)-)-methyltransferase family.

It is found in the cytoplasm. It catalyses the reaction adenosine(37) in tRNA1(Val) + S-adenosyl-L-methionine = N(6)-methyladenosine(37) in tRNA1(Val) + S-adenosyl-L-homocysteine + H(+). Functionally, specifically methylates the adenine in position 37 of tRNA(1)(Val) (anticodon cmo5UAC). The sequence is that of tRNA1(Val) (adenine(37)-N6)-methyltransferase from Salmonella paratyphi C (strain RKS4594).